Reading from the N-terminus, the 379-residue chain is Alanine racemase (379 aa).

Residue Lys35 is the Proton acceptor; specific for D-alanine of the active site. Position 35 is an N6-(pyridoxal phosphate)lysine (Lys35). Arg133 provides a ligand contact to substrate. The active-site Proton acceptor; specific for L-alanine is Tyr265. Met312 contributes to the substrate binding site.

Belongs to the alanine racemase family. The cofactor is pyridoxal 5'-phosphate.

The enzyme catalyses L-alanine = D-alanine. It participates in amino-acid biosynthesis; D-alanine biosynthesis; D-alanine from L-alanine: step 1/1. Functionally, catalyzes the interconversion of L-alanine and D-alanine. May also act on other amino acids. The protein is Alanine racemase (alr) of Treponema denticola (strain ATCC 35405 / DSM 14222 / CIP 103919 / JCM 8153 / KCTC 15104).